A 271-amino-acid chain; its full sequence is 5'-AMP-activated protein kinase subunit beta-2 (271 aa).

The disordered stretch occupies residues 1–47 (MGNTTSERVSGERHGAKAARAEGGGHGPGKEHKIMVGSTDDPSVFSL). Serine 38 is modified (phosphoserine; by ULK1). Threonine 39 is subject to Phosphothreonine; by ULK1. Phosphoserine; by ULK1 is present on serine 68. Phosphoserine is present on residues serine 94 and serine 107. Position 147 is a phosphothreonine (threonine 147). A phosphoserine mark is found at serine 157 and serine 169. Serine 173 is modified (phosphoserine; by ULK1). At serine 183 the chain carries Phosphoserine.

It belongs to the 5'-AMP-activated protein kinase beta subunit family. As to quaternary structure, AMPK is a heterotrimer of an alpha catalytic subunit (PRKAA1 or PRKAA2), a beta (PRKAB1 or PRKAB2) and a gamma non-catalytic subunits (PRKAG1, PRKAG2 or PRKAG3). Phosphorylated when associated with the catalytic subunit (PRKAA1 or PRKAA2). Phosphorylated by ULK1 and ULK2; leading to negatively regulate AMPK activity and suggesting the existence of a regulatory feedback loop between ULK1, ULK2 and AMPK.

In terms of biological role, non-catalytic subunit of AMP-activated protein kinase (AMPK), an energy sensor protein kinase that plays a key role in regulating cellular energy metabolism. In response to reduction of intracellular ATP levels, AMPK activates energy-producing pathways and inhibits energy-consuming processes: inhibits protein, carbohydrate and lipid biosynthesis, as well as cell growth and proliferation. AMPK acts via direct phosphorylation of metabolic enzymes, and by longer-term effects via phosphorylation of transcription regulators. Also acts as a regulator of cellular polarity by remodeling the actin cytoskeleton; probably by indirectly activating myosin. Beta non-catalytic subunit acts as a scaffold on which the AMPK complex assembles, via its C-terminus that bridges alpha (PRKAA1 or PRKAA2) and gamma subunits (PRKAG1, PRKAG2 or PRKAG3). This Rattus norvegicus (Rat) protein is 5'-AMP-activated protein kinase subunit beta-2 (Prkab2).